A 196-amino-acid polypeptide reads, in one-letter code: Imidazoleglycerol-phosphate dehydratase (196 aa).

It belongs to the imidazoleglycerol-phosphate dehydratase family.

It is found in the cytoplasm. The catalysed reaction is D-erythro-1-(imidazol-4-yl)glycerol 3-phosphate = 3-(imidazol-4-yl)-2-oxopropyl phosphate + H2O. Its pathway is amino-acid biosynthesis; L-histidine biosynthesis; L-histidine from 5-phospho-alpha-D-ribose 1-diphosphate: step 6/9. This Lachnoclostridium phytofermentans (strain ATCC 700394 / DSM 18823 / ISDg) (Clostridium phytofermentans) protein is Imidazoleglycerol-phosphate dehydratase.